The sequence spans 72 residues: Delta-actitoxin-Avd2b 3 (72 aa).

The N-terminal stretch at 1-21 is a signal peptide; that stretch reads MMSRLLVFLMLGAAFMLVVSA. The propeptide occupies 22 to 42; it reads NDAYGDEPAFKDLNQGDESLG. 3 disulfides stabilise this stretch: C47/C62, C48/C56, and C50/C67.

The protein belongs to the sea anemone short toxin (type III) family.

It localises to the secreted. It is found in the nematocyst. Functionally, voltage-gated sodium channel (Nav) inhibitor. 1 uM completely inhibits insect voltage-gated sodium channel inactivation (DmNav1 from D.melanogaster). In Anemonia viridis (Snakelocks anemone), this protein is Delta-actitoxin-Avd2b 3.